The sequence spans 308 residues: Polyprenyl-phosphate transporter (308 aa).

A run of 8 helical transmembrane segments spans residues 15–35, 69–89, 91–111, 130–150, 163–183, 200–220, 228–248, and 282–302; these read GLAM…IAFI, INGL…ATLA, LISW…FGLI, LLWL…KPLH, AIAI…LLLI, ILLI…HILS, DVTL…IWPW, and PSQW…VLGL.

The protein belongs to the PopT family.

Its subcellular location is the cell inner membrane. With respect to regulation, active in alkaline conditions. Functionally, flippase that catalyzes the transport of undecaprenyl phosphate (UndP) across the cytoplasmic membrane, from the external side to the cytoplasmic side. Is involved in UndP recycling during peptidoglycan synthesis. Required for cell shape maintenance at alkaline pH and peptidoglycan maintenance. Required by the cholera pathogen for growth and cell shape maintenance in the intestine. The protein is Polyprenyl-phosphate transporter of Vibrio cholerae serotype O1 (strain ATCC 39315 / El Tor Inaba N16961).